The sequence spans 79 residues: RNA-binding protein Hfq (79 aa).

Residues 10-69 form the Sm domain; sequence DPFLNALRKEHVPVSIYLVNGIKLQGNIESFDQYVVLLRNTVTQMVYKHAISTVVPARAV.

This sequence belongs to the Hfq family. As to quaternary structure, homohexamer.

Functionally, RNA chaperone that binds small regulatory RNA (sRNAs) and mRNAs to facilitate mRNA translational regulation in response to envelope stress, environmental stress and changes in metabolite concentrations. Also binds with high specificity to tRNAs. This chain is RNA-binding protein Hfq, found in Ralstonia nicotianae (strain ATCC BAA-1114 / GMI1000) (Ralstonia solanacearum).